We begin with the raw amino-acid sequence, 419 residues long: Enolase (419 aa).

Residue Gln161 participates in (2R)-2-phosphoglycerate binding. The active-site Proton donor is the Glu205. Mg(2+) is bound by residues Asp240, Glu283, and Asp309. The (2R)-2-phosphoglycerate site is built by Lys334, Arg363, Ser364, and Lys385. Lys334 acts as the Proton acceptor in catalysis.

It belongs to the enolase family. Requires Mg(2+) as cofactor.

It localises to the cytoplasm. The protein resides in the secreted. Its subcellular location is the cell surface. The enzyme catalyses (2R)-2-phosphoglycerate = phosphoenolpyruvate + H2O. It participates in carbohydrate degradation; glycolysis; pyruvate from D-glyceraldehyde 3-phosphate: step 4/5. Functionally, catalyzes the reversible conversion of 2-phosphoglycerate (2-PG) into phosphoenolpyruvate (PEP). It is essential for the degradation of carbohydrates via glycolysis. The protein is Enolase of Saccharolobus islandicus (strain L.S.2.15 / Lassen #1) (Sulfolobus islandicus).